The chain runs to 168 residues: Outer-membrane lipoprotein YfiB (168 aa).

Positions methionine 1–glycine 25 are cleaved as a signal peptide. Cysteine 26 carries N-palmitoyl cysteine lipidation. Cysteine 26 carries the S-diacylglycerol cysteine lipid modification. In terms of domain architecture, OmpA-like spans glutamate 53–glutamate 168.

Belongs to the outer membrane OOP (TC 1.B.6) superfamily. Homodimer. Interacts with YfiR. The YfiB-YfiR complex is a 2:2 heterotetramer.

Its subcellular location is the cell outer membrane. With respect to regulation, both lipid anchor in the outer membrane and peptidoglycan binding are required for full activity. Once activated by certain cell stress, the dimeric YfiB transforms from a compact conformation to a stretched conformation, allowing the periplasmic domain of the membrane-anchored YfiB to penetrate the cell wall and sequester the YfiR dimer. GMP enhances the binding affinity between YfiB and YfiR. Activates the diguanylate cyclase TpbB/YfiN by sequestering YfiR at the outer membrane, which counteracts the YfiR-mediated repression of TpbB/YfiN at the inner membrane and leads to increased c-di-GMP production. May act as a sensor of envelope stress. Its function is as follows. Part of the YfiB-TpbB-YfiR (or yfiBNR) system, encoding a tripartite signaling module that modulates intracellular c-di-GMP levels. The system is a key regulator of the small colony variant (SCV) phenotype, and plays an important role in biofilm formation and in vivo persistence. The c-di-GMP produced by TpbB/YfiN stimulates the production of the Pel and Psl exopolysaccharides, which promotes surface attachment, generates an SCV phenotype and confers resistance against phagocytosis. This chain is Outer-membrane lipoprotein YfiB, found in Pseudomonas aeruginosa (strain ATCC 15692 / DSM 22644 / CIP 104116 / JCM 14847 / LMG 12228 / 1C / PRS 101 / PAO1).